The following is a 145-amino-acid chain: Transcription antitermination protein NusB (145 aa).

Belongs to the NusB family.

In terms of biological role, involved in transcription antitermination. Required for transcription of ribosomal RNA (rRNA) genes. Binds specifically to the boxA antiterminator sequence of the ribosomal RNA (rrn) operons. The chain is Transcription antitermination protein NusB from Burkholderia vietnamiensis (strain G4 / LMG 22486) (Burkholderia cepacia (strain R1808)).